A 608-amino-acid chain; its full sequence is RAS guanyl-releasing protein 2 (608 aa).

In terms of domain architecture, N-terminal Ras-GEF spans 4–126 (TLDLDKGCTV…SLIDIESVPT (123 aa)). Residues Ser-116, Ser-117, and Ser-147 each carry the phosphoserine modification. One can recognise a Ras-GEF domain in the interval 154 to 387 (EPMELAEHLT…YQLSLQREPR (234 aa)). Residues 382–405 (LQREPRSKSSPTSPTSCTPPPRPP) form a disordered region. EF-hand domains follow at residues 426-461 (HIEKMVESVFRNFDVDGDGHISQEEFQIIRGNFPYL) and 463-490 (AFGDLDQNQDGCISREEMISYFLRSSSV). Positions 439, 441, 443, 445, 450, 468, 470, 472, 474, and 479 each coordinate Ca(2+). The Phorbol-ester/DAG-type zinc finger occupies 498 to 548 (VHNLQESNSLRPVACRHCKALILGIYKQGLKCRACGVNCHKQCKDRLSVEC). Phosphoserine occurs at positions 554 and 575. Residues 555–596 (VSLEGSAPSPSPTHTHHRAFSFSLPRPGRRSSRPPEIREEEV) form a disordered region.

This sequence belongs to the RASGRP family. As to quaternary structure, forms a signaling complex with RAP1 and BRAF. Interacts with F-actin. Interacts with RAP1. Expressed in striatal neurons (at protein level). Expressed in the hematopoietic system. Detected in olfactory structures and deep cortical layers of brain.

The protein resides in the cytoplasm. It localises to the cytosol. The protein localises to the cell membrane. Its subcellular location is the synapse. It is found in the synaptosome. The protein resides in the cell projection. It localises to the ruffle membrane. Functionally, functions as a calcium- and DAG-regulated nucleotide exchange factor specifically activating Rap through the exchange of bound GDP for GTP. May also activate other GTPases such as RRAS, RRAS2, NRAS, KRAS but not HRAS. Functions in aggregation of platelets and adhesion of T-lymphocytes and neutrophils probably through inside-out integrin activation. May function in the muscarinic acetylcholine receptor M1/CHRM1 signaling pathway. The sequence is that of RAS guanyl-releasing protein 2 (Rasgrp2) from Rattus norvegicus (Rat).